Here is a 462-residue protein sequence, read N- to C-terminus: DIMBOA UDP-glucosyltransferase BX9 (462 aa).

His-24 functions as the Proton acceptor in the catalytic mechanism. His-24 serves as a coordination point for an anthocyanidin. The active-site Charge relay is the Asp-115. UDP-alpha-D-glucose contacts are provided by Thr-137, Ala-336, Gln-338, His-353, Trp-356, Asn-357, Ser-358, and Glu-361. Position 376 (Gly-376) interacts with an anthocyanidin. Residues Asp-377 and Gln-378 each coordinate UDP-alpha-D-glucose.

Belongs to the UDP-glycosyltransferase family. Requires Mg(2+) as cofactor. Ca(2+) is required as a cofactor. Expressed at the same levels in roots and shoots.

It carries out the reaction DIMBOA + UDP-alpha-D-glucose = DIMBOA beta-D-glucoside + UDP + H(+). The enzyme catalyses DIBOA + UDP-alpha-D-glucose = DIBOA beta-D-glucoside + UDP + H(+). Functionally, glucosyltransferase involved in the last step of benzoxazinoid glucoside biosynthesis. Catalyzes the glucosylation of hydroxamic acids utilizing UDP-glucose as glucose doner, reducing the toxicity of these natural insecticides for storage. Can use DIMBOA and DIBOA as substrates, HMBOA (2-hydroxy-7-methoxy-2H-1,4-benzoxazin-3(4H)-one) and HBOA (2-hydroxy-2H-1,4-benzoxazin-3(4H)-one) with a lower efficiency, but not indole acetic acid or quercitin. This chain is DIMBOA UDP-glucosyltransferase BX9 (BX9), found in Zea mays (Maize).